A 314-amino-acid polypeptide reads, in one-letter code: Putative S-adenosyl-L-methionine-dependent methyltransferase MAB_3886c (314 aa).

S-adenosyl-L-methionine-binding positions include aspartate 133 and 162–163 (DL).

This sequence belongs to the UPF0677 family.

Its function is as follows. Exhibits S-adenosyl-L-methionine-dependent methyltransferase activity. This Mycobacteroides abscessus (strain ATCC 19977 / DSM 44196 / CCUG 20993 / CIP 104536 / JCM 13569 / NCTC 13031 / TMC 1543 / L948) (Mycobacterium abscessus) protein is Putative S-adenosyl-L-methionine-dependent methyltransferase MAB_3886c.